The primary structure comprises 157 residues: Vitamin K-dependent protein C (157 aa).

Residues Glu-1–Val-157 enclose the Peptidase S1 domain. Asn-17 is a glycosylation site (N-linked (GlcNAc...) asparagine). Asp-26 serves as the catalytic Charge relay system. A glycan (N-linked (GlcNAc...) asparagine) is linked at Asn-78. Cystine bridges form between Cys-96/Cys-110 and Cys-121/Cys-149. Ser-125 serves as the catalytic Charge relay system.

It belongs to the peptidase S1 family. As to expression, plasma; synthesized in the liver.

The protein resides in the secreted. Its subcellular location is the golgi apparatus. It is found in the endoplasmic reticulum. The enzyme catalyses Degradation of blood coagulation factors Va and VIIIa.. Its function is as follows. Protein C is a vitamin K-dependent serine protease that regulates blood coagulation by inactivating factors Va and VIIIa in the presence of calcium ions and phospholipids. Exerts a protective effect on the endothelial cell barrier function. The sequence is that of Vitamin K-dependent protein C (PROC) from Felis catus (Cat).